A 178-amino-acid chain; its full sequence is Peptide methionine sulfoxide reductase MsrA (178 aa).

Cys-12 is a catalytic residue.

This sequence belongs to the MsrA Met sulfoxide reductase family.

It carries out the reaction L-methionyl-[protein] + [thioredoxin]-disulfide + H2O = L-methionyl-(S)-S-oxide-[protein] + [thioredoxin]-dithiol. The enzyme catalyses [thioredoxin]-disulfide + L-methionine + H2O = L-methionine (S)-S-oxide + [thioredoxin]-dithiol. Has an important function as a repair enzyme for proteins that have been inactivated by oxidation. Catalyzes the reversible oxidation-reduction of methionine sulfoxide in proteins to methionine. The polypeptide is Peptide methionine sulfoxide reductase MsrA (Erwinia tasmaniensis (strain DSM 17950 / CFBP 7177 / CIP 109463 / NCPPB 4357 / Et1/99)).